The following is a 99-amino-acid chain: Large ribosomal subunit protein bL28 (99 aa).

It belongs to the bacterial ribosomal protein bL28 family.

The chain is Large ribosomal subunit protein bL28 from Brucella anthropi (strain ATCC 49188 / DSM 6882 / CCUG 24695 / JCM 21032 / LMG 3331 / NBRC 15819 / NCTC 12168 / Alc 37) (Ochrobactrum anthropi).